A 258-amino-acid chain; its full sequence is Snake venom serine protease 3 (258 aa).

The N-terminal stretch at 1-18 (MVLIRVLANLLILQLSYA) is a signal peptide. Positions 19-24 (QKSSEL) are excised as a propeptide. One can recognise a Peptidase S1 domain in the interval 25–249 (IIGGHPCNIN…YTDWIQSIIA (225 aa)). 6 disulfides stabilise this stretch: Cys31-Cys163, Cys50-Cys66, Cys98-Cys256, Cys142-Cys210, Cys174-Cys189, and Cys200-Cys225. Asn44 carries N-linked (GlcNAc...) asparagine glycosylation. Catalysis depends on charge relay system residues His65 and Asp110. The active-site Charge relay system is the Ser204. Asn239 is a glycosylation site (N-linked (GlcNAc...) asparagine).

Belongs to the peptidase S1 family. Snake venom subfamily. As to quaternary structure, monomer. Expressed by the venom gland.

The protein resides in the secreted. Its function is as follows. Snake venom serine protease that may act in the hemostasis system of the prey. This is Snake venom serine protease 3 from Protobothrops jerdonii (Jerdon's pitviper).